The following is a 562-amino-acid chain: Actin-related protein 8 (562 aa).

248-251 (DVGD) lines the ATP pocket.

Belongs to the actin family. ARP8 subfamily. Component of the chromatin remodeling Ino80 complex. Exists as monomers and dimers, but the dimer is most probably the biologically relevant form required for stable interactions with histones that exploits the twofold symmetry of the nucleosome core.

It is found in the nucleus. Plays an important role in the functional organization of mitotic chromosomes. Exhibits low basal ATPase activity, and unable to polymerize. Its function is as follows. Proposed core component of the chromatin remodeling INO80 complex which is involved in transcriptional regulation, DNA replication and probably DNA repair. Strongly prefer nucleosomes and H3-H4 tetramers over H2A-H2B dimers, suggesting it may act as a nucleosome recognition module within the complex. This is Actin-related protein 8 from Aedes aegypti (Yellowfever mosquito).